Consider the following 195-residue polypeptide: uncharacterized protein (195 aa).

An N-terminal signal peptide occupies residues 1–17 (MKASLITAFVLPLLALA). Residue Asn-75 is glycosylated (N-linked (GlcNAc...) asparagine).

The protein resides in the secreted. This is an uncharacterized protein from Arthroderma benhamiae (strain ATCC MYA-4681 / CBS 112371) (Trichophyton mentagrophytes).